The sequence spans 211 residues: Thymidylate kinase (211 aa).

Residue G10–T17 participates in ATP binding.

The protein belongs to the thymidylate kinase family.

The catalysed reaction is dTMP + ATP = dTDP + ADP. Phosphorylation of dTMP to form dTDP in both de novo and salvage pathways of dTTP synthesis. The protein is Thymidylate kinase of Lactococcus lactis subsp. cremoris (strain MG1363).